Reading from the N-terminus, the 226-residue chain is Cytidylate kinase (226 aa).

10-18 (GPASSGKST) is a binding site for ATP.

The protein belongs to the cytidylate kinase family. Type 1 subfamily.

The protein localises to the cytoplasm. The enzyme catalyses CMP + ATP = CDP + ADP. It carries out the reaction dCMP + ATP = dCDP + ADP. The sequence is that of Cytidylate kinase from Streptococcus pyogenes serotype M5 (strain Manfredo).